We begin with the raw amino-acid sequence, 1207 residues long: MVDVNRFKSMQITLASPSKVRSWSYGEVKKPETINYRTLKPEREGLFDEVIFGPTKDWECACGKYKRIRYKGIVCDRCGVEVTRAKVRRERMGHIELKAPVSHIWYFKGIPSRMGLTLDMSPRALEEVIYFAAYVVIDPKDTPLEPKSLLTEREYREKLQEYGHGSFVAKMGAEAIQDLLKRVDLAAEIAELKEELKSASGQKRIKAVRRLDVLDAFNKSGNKPEWMVLNILPVIPPDLRPMVQLDGGRFAASDLNDLYRRVINRNNRLARLLELNAPGIIVQNEKRMLQEAVDALIDNGRRGRPITGPGSRPLKSLSHMLKGKQGRFRQNLLGKRVDFSGRSVIAVGPTLKMYQCGVPREMAIELFKPFVMREIVAKEYAGNVKAAKRMVERGDERIWDILEEVIKEHPVLLNRAPTLHRLGIQAFEPVLIDGKALRLHPLVCEAYNADFDGDQMAIHVPLSEEAQAEARLLMLAAEHILNPKDGKPVVTPSQDMVLGNYYLTMEDAGREGEGMIFKDKDEAVMAYRNGYAHLHSRVGIAVDSMPNKPWKDSQRHKIMVTTVGKILFNDIMPEDLPYLQEPNNANLTEGTPDKYFLEPGQNIQEVIDGLDINVPFKKKNLGNIIAETFKRFRTTETSAFLDRLKDLGYYHSTLAGLTVGIADIPVIDNKAEIIDAAHHRVEEINKAFRRGLMTDDDRYVAVTTTWREAKEALEKRLIETQDPKNPIVMMMDSGARGNISNFSQLAGMRGLMAAPNGRIMELPILSNFREGLSVLEMFFSTHGARKGMTDTALKTADSGYLTRRLVDVAQDVIIREDDCGTDRGLLIRAITDGKEVTETLEVRLQGRYTRKSVKHPETGEVLIGADQLITEDMARKIVDAGVEEVTIRSVFTCATRHGVCRHCYGINLATGDAVEVGEAVGTIAAQSIGEPGTQLTMRTFHTGGVASNTDITQGLPRIQEIFEARNPKGEAVITEVKGNVVEIEEDASTRTKKVYVQGKTGMGEYVVPFTARMKVEVGDEVNRGAALTEGSIQPKRLLEVRDTLSVETYLLAEVQKVYRSQGVEIGDKHVEVMVRQMLRKVRVMDPGDTDLLPGTLMDISDFTDANKDIVISGGIPATSRPVLMGITKASLETNSFLSAASFQETTRVLTDAAIRGKKDHLLGLKENVIIGKIIPAGTGMARYRNIEPQAMNEIEVIDHTEVSAEAE.

Cys60, Cys62, Cys75, and Cys78 together coordinate Zn(2+). 3 residues coordinate Mg(2+): Asp450, Asp452, and Asp454. Cys819, Cys893, Cys900, and Cys903 together coordinate Zn(2+).

The protein belongs to the RNA polymerase beta' chain family. In terms of assembly, the RNAP catalytic core consists of 2 alpha, 1 beta, 1 beta' and 1 omega subunit. When a sigma factor is associated with the core the holoenzyme is formed, which can initiate transcription. It depends on Mg(2+) as a cofactor. The cofactor is Zn(2+).

The enzyme catalyses RNA(n) + a ribonucleoside 5'-triphosphate = RNA(n+1) + diphosphate. DNA-dependent RNA polymerase catalyzes the transcription of DNA into RNA using the four ribonucleoside triphosphates as substrates. The polypeptide is DNA-directed RNA polymerase subunit beta' (Streptococcus pyogenes serotype M3 (strain SSI-1)).